The following is a 345-amino-acid chain: Transcription factor 19 (345 aa).

The FHA domain occupies 31 to 88 (YRLGHRADLCDVALRPQQEPGLISGIHAELHAEPRGDDWRVSLEDHSSQGTLVNNVRL). Serine 78 is subject to Phosphoserine. The interval 190–227 (LTFSPSWGGPKSLPVPAPPGEMGTTPSAPPQRNRRKSV) is disordered. The segment at 293-342 (AAPCCCLPQEETVAWVQCDGCDVWFHVACVGCSIQAAREADFRCPGCRAG) adopts a PHD-type zinc-finger fold. Cysteine 296, cysteine 298, cysteine 310, cysteine 313, histidine 318, cysteine 321, cysteine 336, and cysteine 339 together coordinate Zn(2+).

The protein resides in the nucleus. In terms of biological role, potential transcription factor that may play a role in the regulation of genes involved in cell cycle G1/S transition. May bind to regulatory elements of genes, including the promoter of the transcription factor FOXO1. The protein is Transcription factor 19 (TCF19) of Homo sapiens (Human).